The chain runs to 461 residues: Tol-Pal system protein TolB 2 (461 aa).

Positions 1 to 20 (MKIRHLLLLAGLVSAPAIVA) are cleaved as a signal peptide. Residues 28–47 (SSSAAQASGDDDGGLTGSVS) form a disordered region.

It belongs to the TolB family. In terms of assembly, the Tol-Pal system is composed of five core proteins: the inner membrane proteins TolA, TolQ and TolR, the periplasmic protein TolB and the outer membrane protein Pal. They form a network linking the inner and outer membranes and the peptidoglycan layer.

It is found in the periplasm. Its function is as follows. Part of the Tol-Pal system, which plays a role in outer membrane invagination during cell division and is important for maintaining outer membrane integrity. This is Tol-Pal system protein TolB 2 from Novosphingobium aromaticivorans (strain ATCC 700278 / DSM 12444 / CCUG 56034 / CIP 105152 / NBRC 16084 / F199).